Here is a 391-residue protein sequence, read N- to C-terminus: Aspartate aminotransferase (391 aa).

G40 and N176 together coordinate L-aspartate. K236 carries the post-translational modification N6-(pyridoxal phosphate)lysine. R366 provides a ligand contact to L-aspartate.

It belongs to the class-I pyridoxal-phosphate-dependent aminotransferase family. In terms of assembly, homodimer. It depends on pyridoxal 5'-phosphate as a cofactor.

The protein resides in the cytoplasm. The enzyme catalyses L-aspartate + 2-oxoglutarate = oxaloacetate + L-glutamate. The protein is Aspartate aminotransferase (aspC) of Pyrococcus horikoshii (strain ATCC 700860 / DSM 12428 / JCM 9974 / NBRC 100139 / OT-3).